A 1065-amino-acid chain; its full sequence is Cellulose synthase A catalytic subunit 3 [UDP-forming] (1065 aa).

Residues 1–260 lie on the Cytoplasmic side of the membrane; it reads MESEGETAGK…PSSRINPYRM (260 aa). Position 3 is a phosphoserine (Ser3). Zn(2+)-binding residues include Cys20, Cys23, Cys39, Cys42, Cys47, Cys50, Cys62, and Cys65. The RING-type; degenerate zinc finger occupies 20–66; sequence CQICSDNVGKTVDGDRFVACDICSFPVCRPCYEYERKDGNQSCPQCK. Phosphoserine is present on residues Ser151, Ser211, and Ser216. The helical transmembrane segment at 261 to 281 threads the bilayer; that stretch reads VIMLRLVILCLFLHYRITNPV. At 282 to 283 the chain is on the extracellular side; the sequence is PN. A helical membrane pass occupies residues 284–304; sequence AFALWLVSVICEIWFALSWIL. Residues 305–842 are Cytoplasmic-facing; it reads DQFPKWFPVN…LERFAYVNTT (538 aa). Residues Ser343, Lys349, Glu350, and Asp379 each coordinate UDP-alpha-D-glucose. The active site involves Asp379. A coiled-coil region spans residues 433–457; it reads VKDRRAMKREYEEFKIRINALVSKA. Position 520 (Lys520) interacts with UDP-alpha-D-glucose. Positions 521 and 545 each coordinate Mn(2+). The segment at 643–672 is disordered; that stretch reads SKLCGGSRKKNSKAKKESDKKKSGRHTDST. Basic and acidic residues predominate over residues 656-670; the sequence is AKKESDKKKSGRHTD. The active site involves Asp765. The helical transmembrane segment at 843–863 threads the bilayer; sequence IYPITSIPLLMYCTLPAVCLF. Topologically, residues 864 to 874 are extracellular; sequence TNQFIIPQISN. The chain crosses the membrane as a helical span at residues 875–895; the sequence is IASIWFLSLFLSIFATGILEM. The Cytoplasmic portion of the chain corresponds to 896-910; that stretch reads RWSGVGIDEWWRNEQ. A helical membrane pass occupies residues 911–931; sequence FWVIGGVSAHLFAVFQGILKV. Residues 932–961 are Extracellular-facing; it reads LAGIDTNFTVTSKASDEDGDFAELYLFKWT. Asn938 is a glycosylation site (N-linked (GlcNAc...) asparagine). The chain crosses the membrane as a helical span at residues 962–982; sequence TLLIPPTTLLIVNLVGVVAGV. Topologically, residues 983–993 are cytoplasmic; that stretch reads SYAINSGYQSW. Residues 994–1014 traverse the membrane as a helical segment; the sequence is GPLFGKLFFAFWVIVHLYPFL. At 1015–1023 the chain is on the extracellular side; the sequence is KGLMGRQNR. A helical transmembrane segment spans residues 1024–1044; that stretch reads TPTIVVVWSVLLASIFSLLWV. Residues 1045-1065 are Cytoplasmic-facing; the sequence is RIDPFTSRVTGPDILECGINC.

Belongs to the glycosyltransferase 2 family. Plant cellulose synthase subfamily. As to quaternary structure, homodimer. Interacts with CESA1 and CESA6. Interacts with STL1 and STL2, but not with GOT1. Binds to CSI1 and CSI3. Interacts with PAT24/TIP1. Requires Zn(2+) as cofactor. Mn(2+) serves as cofactor. In terms of processing, palmitoylated, in part by PAT24/TIP1. As to expression, expressed in young plants, flowers and roots, and to a lower extent in leaves and stems. Localized in all cells except meristematic cells. Accumulates particularly in root caps, root hairs, epidermal layer, midveins of leaves and anthers. Not present in old tissues.

The protein resides in the cell membrane. It is found in the golgi apparatus membrane. It carries out the reaction [(1-&gt;4)-beta-D-glucosyl](n) + UDP-alpha-D-glucose = [(1-&gt;4)-beta-D-glucosyl](n+1) + UDP + H(+). It functions in the pathway glycan metabolism; plant cellulose biosynthesis. Its function is as follows. Catalytic subunit of cellulose synthase terminal complexes ('rosettes'), required for beta-1,4-glucan microfibril crystallization, a major mechanism of the cell wall formation. Involved in the primary cell wall formation, especially in roots. The chain is Cellulose synthase A catalytic subunit 3 [UDP-forming] from Arabidopsis thaliana (Mouse-ear cress).